The chain runs to 255 residues: Taurine import ATP-binding protein TauB (255 aa).

The region spanning 2-229 (LQISHLYADY…RFVAGESSRS (228 aa)) is the ABC transporter domain. 34 to 41 (GPSGCGKT) lines the ATP pocket.

Belongs to the ABC transporter superfamily. Taurine importer (TC 3.A.1.17.1) family. The complex is composed of two ATP-binding proteins (TauB), two transmembrane proteins (TauC) and a solute-binding protein (TauA).

It is found in the cell inner membrane. The enzyme catalyses taurine(out) + ATP + H2O = taurine(in) + ADP + phosphate + H(+). Its function is as follows. Part of the ABC transporter complex TauABC involved in taurine import. Responsible for energy coupling to the transport system. This chain is Taurine import ATP-binding protein TauB, found in Shigella boydii serotype 4 (strain Sb227).